Here is a 282-residue protein sequence, read N- to C-terminus: tRNA pseudouridine synthase B (282 aa).

Asp-39 (nucleophile) is an active-site residue.

This sequence belongs to the pseudouridine synthase TruB family. Type 1 subfamily.

It catalyses the reaction uridine(55) in tRNA = pseudouridine(55) in tRNA. In terms of biological role, responsible for synthesis of pseudouridine from uracil-55 in the psi GC loop of transfer RNAs. This Borreliella burgdorferi (strain ATCC 35210 / DSM 4680 / CIP 102532 / B31) (Borrelia burgdorferi) protein is tRNA pseudouridine synthase B.